We begin with the raw amino-acid sequence, 345 residues long: UDP-3-O-acylglucosamine N-acyltransferase (345 aa).

Histidine 253 functions as the Proton acceptor in the catalytic mechanism.

This sequence belongs to the transferase hexapeptide repeat family. LpxD subfamily. Homotrimer.

The enzyme catalyses a UDP-3-O-[(3R)-3-hydroxyacyl]-alpha-D-glucosamine + a (3R)-hydroxyacyl-[ACP] = a UDP-2-N,3-O-bis[(3R)-3-hydroxyacyl]-alpha-D-glucosamine + holo-[ACP] + H(+). It functions in the pathway bacterial outer membrane biogenesis; LPS lipid A biosynthesis. Functionally, catalyzes the N-acylation of UDP-3-O-acylglucosamine using 3-hydroxyacyl-ACP as the acyl donor. Is involved in the biosynthesis of lipid A, a phosphorylated glycolipid that anchors the lipopolysaccharide to the outer membrane of the cell. In Rickettsia massiliae (strain Mtu5), this protein is UDP-3-O-acylglucosamine N-acyltransferase.